Here is a 116-residue protein sequence, read N- to C-terminus: uncharacterized protein (116 aa).

2 disordered regions span residues 1–26 (MLLTPAKTTRTEDSANSTDDSSKSSN) and 74–116 (ENDL…KSSI). Residues 14-26 (SANSTDDSSKSSN) show a composition bias toward low complexity. Basic and acidic residues predominate over residues 74 to 86 (ENDLKRSKSQGRE). The span at 104–116 (NTASEIQRTKSSI) shows a compositional bias: polar residues.

This is an uncharacterized protein from Saccharomyces cerevisiae (strain ATCC 204508 / S288c) (Baker's yeast).